The sequence spans 745 residues: Double-stranded RNA-specific editase B2 (745 aa).

2 disordered regions span residues 1-35 and 50-104; these read MASV…RKDK and SPGT…PLEE. Residues 20-34 are compositionally biased toward basic residues; sequence CKSKRRRRRRSKRKD. Residues 23–35 form an R-domain (ssRNA-binding) region; that stretch reads KRRRRRRSKRKDK. DRBM domains are found at residues 125-191 and 283-347; these read TPKN…SFVQ and NPVV…ALFD. An A to I editase domain is found at 414–741; that stretch reads VLSSGTKCIS…VRKPPEQDQF (328 aa). Position 438 (histidine 438) interacts with Zn(2+). The active-site Proton donor is the glutamate 440. Zn(2+)-binding residues include cysteine 496 and cysteine 561.

In terms of tissue distribution, brain specific.

Its subcellular location is the nucleus. Lacks editing activity. It prevents the binding of other ADAR enzymes to targets in vitro, and decreases the efficiency of these enzymes. Capable of binding to dsRNA but also to ssRNA. The polypeptide is Double-stranded RNA-specific editase B2 (Adarb2) (Mus musculus (Mouse)).